The chain runs to 355 residues: RNA 3'-terminal phosphate cyclase (355 aa).

ATP contacts are provided by residues Gln109 and 291-295 (HLADQ). The Tele-AMP-histidine intermediate role is filled by His316.

The protein belongs to the RNA 3'-terminal cyclase family. Type 1 subfamily.

It localises to the cytoplasm. The catalysed reaction is a 3'-end 3'-phospho-ribonucleotide-RNA + ATP = a 3'-end 2',3'-cyclophospho-ribonucleotide-RNA + AMP + diphosphate. Its function is as follows. Catalyzes the conversion of 3'-phosphate to a 2',3'-cyclic phosphodiester at the end of RNA. The mechanism of action of the enzyme occurs in 3 steps: (A) adenylation of the enzyme by ATP; (B) transfer of adenylate to an RNA-N3'P to produce RNA-N3'PP5'A; (C) and attack of the adjacent 2'-hydroxyl on the 3'-phosphorus in the diester linkage to produce the cyclic end product. The biological role of this enzyme is unknown but it is likely to function in some aspects of cellular RNA processing. In Koribacter versatilis (strain Ellin345), this protein is RNA 3'-terminal phosphate cyclase.